We begin with the raw amino-acid sequence, 576 residues long: Acyl-CoA ligase sidI (576 aa).

Residues 3-11 (PVTTKTIRP) carry the PTS2-type peroxisomal targeting signal motif. ATP is bound by residues D439, R454, and K553.

It belongs to the ATP-dependent AMP-binding enzyme family.

The protein resides in the peroxisome. It functions in the pathway siderophore biosynthesis. Functionally, acyl-CoA ligase; part of the gene cluster that mediates the biosynthesis of at least 11 siderophores, including beauverichelin A, dimerumic acid (DA), Na-dimethyl coprogen (NADC), eleutherazine B, ferricrocin (FC), fusarinine A, fusarinine C (FsC), metachelin A, mevalonolactone, rhodotorulic acid (RA) and tenellin. This cocktail of siderophores for iron metabolism is essential for virulence, and more specifically for the fungal virulence in penetrating through the host cuticle. Siderophore synthesis is also involved in conidial germination under iron-deficient conditions. For biosynthesis of fusarinine C, the transacylase SIDF transfers anhydromevalonyl to N(5)-hydroxyornithine. The required anhydromevalonyl-CoA moiety is derived from mevalonate by CoA ligation and dehydration catalyzed by SIDI and sidH respectively. The protein is Acyl-CoA ligase sidI of Beauveria bassiana (strain ARSEF 2860) (White muscardine disease fungus).